A 296-amino-acid chain; its full sequence is Pantothenate synthetase (296 aa).

31-38 provides a ligand contact to ATP; it reads MGYLHEGH. Residue His38 is the Proton donor of the active site. (R)-pantoate is bound at residue Gln62. Gln62 is a beta-alanine binding site. 148-151 provides a ligand contact to ATP; the sequence is GEKD. Gln154 is a binding site for (R)-pantoate. ATP is bound by residues Val177 and 185-188; that span reads LSSR.

Belongs to the pantothenate synthetase family. In terms of assembly, homodimer.

It is found in the cytoplasm. The enzyme catalyses (R)-pantoate + beta-alanine + ATP = (R)-pantothenate + AMP + diphosphate + H(+). It functions in the pathway cofactor biosynthesis; (R)-pantothenate biosynthesis; (R)-pantothenate from (R)-pantoate and beta-alanine: step 1/1. In terms of biological role, catalyzes the condensation of pantoate with beta-alanine in an ATP-dependent reaction via a pantoyl-adenylate intermediate. This chain is Pantothenate synthetase, found in Deinococcus geothermalis (strain DSM 11300 / CIP 105573 / AG-3a).